The sequence spans 381 residues: Guanine nucleotide-binding protein subunit alpha-12 (381 aa).

Cys-11 is lipidated: S-palmitoyl cysteine. The region spanning Arg-56–Gln-381 is the G-alpha domain. The segment at Lys-59–Thr-72 is G1 motif. GTP contacts are provided by residues Glu-67 to Thr-72 and Leu-202 to Arg-205. Ser-71 is a binding site for Mg(2+). A G2 motif region spans residues Asp-200–Thr-208. Residue Thr-208 coordinates Mg(2+). Thr-208 carries the phosphothreonine modification. The G3 motif stretch occupies residues Phe-223–Arg-232. A G4 motif region spans residues Ile-292 to Asp-299. GTP-binding positions include Asn-296 to Asp-299 and Ala-353. Residues Thr-351–Thr-356 are G5 motif.

This sequence belongs to the G-alpha family. G(12) subfamily. G proteins are composed of 3 units; alpha, beta and gamma. The alpha chain contains the guanine nucleotide binding site. Interacts with UBXD5. Interacts (in GTP-bound form) with PPP5C (via TPR repeats); activates PPP5C phosphatase activity and translocates PPP5C to the cell membrane. Interacts with RGS22. Interacts (via N-terminus) with NAPA; the interaction promotes CDH5 localization to plasma membrane. Interacts with CTNND1 (via N-terminus); the interaction regulates CDH1-mediated cell-cell adhesion. Interacts with PPP2R1A; the interaction promotes protein phosphatase 2A activation causing dephosphorylation of MAPT. Interacts (in GTP-bound form) with ARHGEF1. Interacts (in GTP-bound form) with ARHGEF11 (via RGS domain). Interacts (in GTP-bound form) with ARHGEF12 (via RGS domain).

It is found in the cell membrane. It localises to the lateral cell membrane. The protein localises to the cytoplasm. Functionally, guanine nucleotide-binding proteins (G proteins) are involved as modulators or transducers in various transmembrane signaling systems. Activates effector molecule RhoA by binding and activating RhoGEFs (ARHGEF12/LARG). GNA12-dependent Rho signaling subsequently regulates transcription factor AP-1 (activating protein-1). GNA12-dependent Rho signaling also regulates protein phosphatese 2A activation causing dephosphorylation of its target proteins. Promotes tumor cell invasion and metastasis by activating RhoA/ROCK signaling pathway and up-regulating pro-inflammatory cytokine production. Inhibits CDH1-mediated cell adhesion in process independent from Rho activation. Together with NAPA promotes CDH5 localization to plasma membrane. May play a role in the control of cell migration through the TOR signaling cascade. In Homo sapiens (Human), this protein is Guanine nucleotide-binding protein subunit alpha-12 (GNA12).